The sequence spans 315 residues: Acetaldehyde dehydrogenase (315 aa).

13–16 lines the NAD(+) pocket; sequence SGNI. The active-site Acyl-thioester intermediate is Cys143. Residues 174 to 182 and Asn285 contribute to the NAD(+) site; that span reads SAGPGTRKN.

The protein belongs to the acetaldehyde dehydrogenase family.

It catalyses the reaction acetaldehyde + NAD(+) + CoA = acetyl-CoA + NADH + H(+). In Shewanella woodyi (strain ATCC 51908 / MS32), this protein is Acetaldehyde dehydrogenase.